The primary structure comprises 354 residues: NAD-dependent epimerase/dehydratase ALT6 (354 aa).

NADP(+) is bound by residues K41 and Y174.

Belongs to the NAD(P)-dependent epimerase/dehydratase family. Dihydroflavonol-4-reductase subfamily.

Its pathway is mycotoxin biosynthesis. Its function is as follows. NAD-dependent epimerase/dehydratase; part of the gene cluster that mediates the biosynthesis of the host-selective toxins (HSTs) AAL-toxins, sphinganine-analog mycotoxins responsible for Alternaria stem canker on tomato by the tomato pathotype. The biosynthesis starts with the polyketide synthase ALT1-catalyzed C-16 carbon chain assembly from one starter acetyl-CoA unit with malonyl-CoA extender units. ALT1 also selectively transfers methyl groups at the first and the third cycle of chain elongation for AAL toxin. The C-16 polyketide chain is released from the enzyme by a nucleophilic attack of a carbanion, which is derived from R-carbon of glycin by decarboxylation, on the carbonyl carbon of polyketide acyl chain. This step is probably catalyzed by a pyridoxal 5'-phosphate-dependent aminoacyl transferase ALT4. The respective functions of the other enzymes encoded by the cluster have still to be elucidated. The sphingosine N-acyltransferase-like protein ALT7 seems not to act as a resistance/self-tolerance factor against the toxin in the toxin biosynthetic gene cluster, contrary to what is expected. The chain is NAD-dependent epimerase/dehydratase ALT6 from Alternaria alternata (Alternaria rot fungus).